Here is a 535-residue protein sequence, read N- to C-terminus: T-complex protein 1 subunit beta (535 aa).

Position 1 is an N-acetylmethionine (Met1). The residue at position 2 (Ala2) is an N-acetylalanine. Ser3 carries the phosphoserine modification. The residue at position 13 (Lys13) is an N6-acetyllysine. Residue Gly44 participates in ADP binding. Gly44 lines the ATP pocket. At Ser60 the chain carries Phosphoserine. Mg(2+) is bound at residue Asp97. ADP contacts are provided by Gly98, Thr99, Thr100, and Ser101. Positions 98, 99, and 100 each coordinate ATP. Lys154 is modified (N6-acetyllysine). ADP is bound by residues Ser168 and Ser169. The residue at position 181 (Lys181) is an N6-acetyllysine. Lys248 is covalently cross-linked (Glycyl lysine isopeptide (Lys-Gly) (interchain with G-Cter in SUMO2)). Ser260 is modified (phosphoserine). At Thr261 the chain carries Phosphothreonine. ADP-binding residues include Gly410, Glu495, and Lys500. Glu495 and Lys500 together coordinate ATP.

It belongs to the TCP-1 chaperonin family. Component of the chaperonin-containing T-complex (TRiC), a hexadecamer composed of two identical back-to-back stacked rings enclosing a protein folding chamber. Each ring is made up of eight different subunits: TCP1/CCT1, CCT2, CCT3, CCT4, CCT5, CCT6A/CCT6, CCT7, CCT8. Interacts with PACRG. Interacts with FLCN. Interacts with DLEC1. Interacts with SVEP1.

The protein localises to the cytoplasm. It catalyses the reaction ATP + H2O = ADP + phosphate + H(+). Its function is as follows. Component of the chaperonin-containing T-complex (TRiC), a molecular chaperone complex that assists the folding of actin, tubulin and other proteins upon ATP hydrolysis. The TRiC complex mediates the folding of WRAP53/TCAB1, thereby regulating telomere maintenance. As part of the TRiC complex may play a role in the assembly of BBSome, a complex involved in ciliogenesis regulating transports vesicles to the cilia. The polypeptide is T-complex protein 1 subunit beta (Homo sapiens (Human)).